Here is a 292-residue protein sequence, read N- to C-terminus: 2,3-dihydroxybenzoate decarboxylase (292 aa).

Cys263 is an active-site residue.

The protein belongs to the metallo-dependent hydrolases superfamily. In terms of assembly, homotetramer.

The catalysed reaction is 2,3-dihydroxybenzoate + H(+) = catechol + CO2. Its pathway is aromatic compound metabolism; benzoate degradation via hydroxylation. This is 2,3-dihydroxybenzoate decarboxylase from Aspergillus niger.